The chain runs to 843 residues: Protein translocase subunit SecA 1 (843 aa).

Residues Gln91, 109-113 (GEGKT), and Asp498 contribute to the ATP site. Positions 799 to 813 (EAKHVSAEDGKEKVK) are enriched in basic and acidic residues. The tract at residues 799 to 826 (EAKHVSAEDGKEKVKPKPIVKGDQVGRN) is disordered. Residues Cys829, Cys831, Cys840, and His841 each coordinate Zn(2+).

Belongs to the SecA family. In terms of assembly, monomer and homodimer. Part of the essential Sec protein translocation apparatus which comprises SecA, SecYEG and auxiliary proteins SecDF. Other proteins may also be involved. The cofactor is Zn(2+).

It is found in the cell membrane. The protein resides in the cytoplasm. The enzyme catalyses ATP + H2O + cellular proteinSide 1 = ADP + phosphate + cellular proteinSide 2.. Functionally, part of the Sec protein translocase complex. Interacts with the SecYEG preprotein conducting channel. Has a central role in coupling the hydrolysis of ATP to the transfer of proteins into and across the cell membrane, serving as an ATP-driven molecular motor driving the stepwise translocation of polypeptide chains across the membrane. This chain is Protein translocase subunit SecA 1, found in Staphylococcus aureus (strain MRSA252).